A 741-amino-acid polypeptide reads, in one-letter code: Zinc transporter ZIP6 (741 aa).

The signal sequence occupies residues 1-20 (MATNLSVIMILTFALWVTNP). Residues 21–311 (LHELQSTAAF…PKTYSLQIAW (291 aa)) lie on the Extracellular side of the membrane. N-linked (GlcNAc...) asparagine glycosylation is present at Asn68. Residues 95–111 (HDHERHSDHERHSDHER) are compositionally biased toward basic and acidic residues. 2 disordered regions span residues 95-172 (HDHE…EVTS) and 189-213 (ETPKPGRRTKDINPSTPPSITEKSR). The segment covering 135 to 147 (DNSGKNPNTSQGK) has biased composition (polar residues). Asn142 carries an N-linked (GlcNAc...) asparagine glycan. Residues 150–162 (RPAEHVNGRRNGK) are compositionally biased toward basic and acidic residues. Over residues 163–172 (ESASSSEVTS) the composition is skewed to low complexity. A compositionally biased stretch (polar residues) spans 200 to 209 (INPSTPPSIT). Residues Asn226, Asn251, and Asn268 are each glycosylated (N-linked (GlcNAc...) asparagine). Residues 312–332 (LGGFIAISIISFLSLLGVILV) traverse the membrane as a helical segment. The Cytoplasmic segment spans residues 333-341 (PLMNRVFFK). A helical membrane pass occupies residues 342-362 (FLLSFLVALAVGTLSGDALLH). Topologically, residues 363-409 (LLPHSHASHHHSHSHEEPAMEMKRGPLFSHLSAQNLEESSYFDSTWK) are extracellular. A helical transmembrane segment spans residues 410-430 (GLTALGGLYFMFLVEHVLTLI). The Cytoplasmic segment spans residues 431 to 643 (KQFKDKKKKN…LKAGMTVKQA (213 aa)). The segment at 434–494 (KDKKKKNQKK…QEPSPFDSQQ (61 aa)) is disordered. The stretch at 450–475 (VESKKQLSKYESQLSTNEEKVDTGER) forms a coiled coil. Residues Ser457 and Ser464 each carry the phosphoserine modification. The segment covering 466–477 (NEEKVDTGERPE) has biased composition (basic and acidic residues). Residues 481 to 494 (QADSQEPSPFDSQQ) show a composition bias toward polar residues. A helical transmembrane segment spans residues 644-664 (VLYNALSAMLAYLGMATGIFI). Residues 665 to 672 (GHYAENVS) are Extracellular-facing. An N-linked (GlcNAc...) asparagine glycan is attached at Asn670. Residues 673-693 (MWIFALTAGLFMYVALVDMVP) form a helical membrane-spanning segment. Residues 694 to 710 (EMLHNDASDHGCSRWGY) are Cytoplasmic-facing. A helical membrane pass occupies residues 711–731 (FFLQNAGILLGFGIMLLISIF). Residues 732 to 741 (EHKIVFRINF) are Extracellular-facing.

The protein belongs to the ZIP transporter (TC 2.A.5) family. Interacts with SLC39A10; which triggers cells to undergo EMT and mitosis. Found in a complex with SLC39A6, SLC39A10 and with the 'Ser-727' phosphorylated form of STAT3 throughout mitosis. Found in a complex with SLC39A6, SLC39A10 and with NCAM1; this complex controls NCAM1 phosphorylation and integration into focal adhesion complexes during epithelial-to-mesenchymal transition (EMT). Found in a complex with SLC39A6, SLC39A10 and with GSK3B that controls NCAM1 phosphorylation. Cleaved on the N-terminus before locating to the plasma membrane. Post-translationally, N-glycosylated. In terms of processing, phosphorylated by ZAP70 in response to TCR stimulation leading to its activation. In terms of tissue distribution, expressed in the endothelial cells of the brain capillaries.

Its subcellular location is the cell membrane. The protein localises to the cell projection. It localises to the lamellipodium membrane. The protein resides in the membrane raft. It is found in the apical cell membrane. It carries out the reaction Zn(2+)(in) = Zn(2+)(out). Its function is as follows. Zinc-influx transporter which plays a role in zinc homeostasis and in the induction of epithelial-to-mesenchymal transition (EMT). When associated with SLC39A10, the heterodimer formed by SLC39A10 and SLC39A6 mediates cellular zinc uptake to trigger cells to undergo epithelial- to-mesenchymal transition (EMT). The SLC39A10-SLC39A6 heterodimer also controls NCAM1 phosphorylation and its integration into focal adhesion complexes during EMT. Zinc influx inactivates GSK3B, enabling unphosphorylated SNAI1 in the nucleus to down-regulate adherence genes such as CDH1, causing loss of cell adherence. In addition, the SLC39A10-SLC39A6 heterodimer plays an essentiel role in initiating mitosis by importing zinc into cells to initiate a pathway resulting in the onset of mitosis. Participates in the T-cell receptor signaling regulation by mediating cellular zinc uptake into activated lymphocytes. Regulates the zinc influx necessary for proper meiotic progression to metaphase II (MII) that allows the oocyte-to-egg transition. In Rattus norvegicus (Rat), this protein is Zinc transporter ZIP6.